Reading from the N-terminus, the 332-residue chain is Glycerol-3-phosphate dehydrogenase [NAD(P)+] (332 aa).

NADPH-binding residues include Ser-11, Phe-12, Arg-32, and Lys-106. Sn-glycerol 3-phosphate contacts are provided by Lys-106, Gly-134, and Ser-136. Position 138 (Ala-138) interacts with NADPH. Residues Lys-189, Asp-242, Ser-252, Arg-253, and Asn-254 each contribute to the sn-glycerol 3-phosphate site. Lys-189 serves as the catalytic Proton acceptor. Arg-253 contacts NADPH. NADPH is bound by residues Val-277 and Glu-279.

The protein belongs to the NAD-dependent glycerol-3-phosphate dehydrogenase family.

It localises to the cytoplasm. It carries out the reaction sn-glycerol 3-phosphate + NAD(+) = dihydroxyacetone phosphate + NADH + H(+). It catalyses the reaction sn-glycerol 3-phosphate + NADP(+) = dihydroxyacetone phosphate + NADPH + H(+). It functions in the pathway membrane lipid metabolism; glycerophospholipid metabolism. Catalyzes the reduction of the glycolytic intermediate dihydroxyacetone phosphate (DHAP) to sn-glycerol 3-phosphate (G3P), the key precursor for phospholipid synthesis. The sequence is that of Glycerol-3-phosphate dehydrogenase [NAD(P)+] from Clostridium acetobutylicum (strain ATCC 824 / DSM 792 / JCM 1419 / IAM 19013 / LMG 5710 / NBRC 13948 / NRRL B-527 / VKM B-1787 / 2291 / W).